Consider the following 190-residue polypeptide: Protein GrpE (190 aa).

Belongs to the GrpE family. In terms of assembly, homodimer.

Its subcellular location is the cytoplasm. Functionally, participates actively in the response to hyperosmotic and heat shock by preventing the aggregation of stress-denatured proteins, in association with DnaK and GrpE. It is the nucleotide exchange factor for DnaK and may function as a thermosensor. Unfolded proteins bind initially to DnaJ; upon interaction with the DnaJ-bound protein, DnaK hydrolyzes its bound ATP, resulting in the formation of a stable complex. GrpE releases ADP from DnaK; ATP binding to DnaK triggers the release of the substrate protein, thus completing the reaction cycle. Several rounds of ATP-dependent interactions between DnaJ, DnaK and GrpE are required for fully efficient folding. This chain is Protein GrpE, found in Streptococcus agalactiae serotype III (strain NEM316).